We begin with the raw amino-acid sequence, 357 residues long: S-adenosylmethionine:tRNA ribosyltransferase-isomerase (357 aa).

The protein belongs to the QueA family. In terms of assembly, monomer.

Its subcellular location is the cytoplasm. The catalysed reaction is 7-aminomethyl-7-carbaguanosine(34) in tRNA + S-adenosyl-L-methionine = epoxyqueuosine(34) in tRNA + adenine + L-methionine + 2 H(+). The protein operates within tRNA modification; tRNA-queuosine biosynthesis. In terms of biological role, transfers and isomerizes the ribose moiety from AdoMet to the 7-aminomethyl group of 7-deazaguanine (preQ1-tRNA) to give epoxyqueuosine (oQ-tRNA). The sequence is that of S-adenosylmethionine:tRNA ribosyltransferase-isomerase from Buchnera aphidicola subsp. Acyrthosiphon pisum (strain Tuc7).